Consider the following 941-residue polypeptide: Bifunctional uridylyltransferase/uridylyl-removing enzyme (941 aa).

Residues 1 to 372 (MAKHDLSDAT…RFAHRPRRIP (372 aa)) form a uridylyltransferase region. Residues 373-728 (GTPEFIEDRG…VRTHSFHAIT (356 aa)) form a uridylyl-removing region. An HD domain is found at 489–611 (VDEHLIRSVG…VQSLDRLRML (123 aa)). ACT domains are found at residues 729–810 (EITV…EVIA) and 840–919 (VIEI…LREQ). Residues 916–941 (LREQMPSGIIAPAATKSPAAEKKARV) are disordered.

This sequence belongs to the GlnD family. It depends on Mg(2+) as a cofactor.

The enzyme catalyses [protein-PII]-L-tyrosine + UTP = [protein-PII]-uridylyl-L-tyrosine + diphosphate. The catalysed reaction is [protein-PII]-uridylyl-L-tyrosine + H2O = [protein-PII]-L-tyrosine + UMP + H(+). With respect to regulation, uridylyltransferase (UTase) activity is inhibited by glutamine, while glutamine activates uridylyl-removing (UR) activity. In terms of biological role, modifies, by uridylylation and deuridylylation, the PII regulatory proteins (GlnB and homologs), in response to the nitrogen status of the cell that GlnD senses through the glutamine level. Under low glutamine levels, catalyzes the conversion of the PII proteins and UTP to PII-UMP and PPi, while under higher glutamine levels, GlnD hydrolyzes PII-UMP to PII and UMP (deuridylylation). Thus, controls uridylylation state and activity of the PII proteins, and plays an important role in the regulation of nitrogen assimilation and metabolism. The chain is Bifunctional uridylyltransferase/uridylyl-removing enzyme from Allorhizobium ampelinum (strain ATCC BAA-846 / DSM 112012 / S4) (Agrobacterium vitis (strain S4)).